The sequence spans 323 residues: Glucokinase (323 aa).

Position 8-13 (8-13 (GDVGGT)) interacts with ATP.

Belongs to the bacterial glucokinase family.

Its subcellular location is the cytoplasm. The enzyme catalyses D-glucose + ATP = D-glucose 6-phosphate + ADP + H(+). The protein is Glucokinase of Yersinia enterocolitica serotype O:8 / biotype 1B (strain NCTC 13174 / 8081).